The following is a 511-amino-acid chain: Bifunctional purine biosynthesis protein PurH (511 aa).

One can recognise an MGS-like domain in the interval 1 to 145 (MKKRALVSVS…KNHKFVSVIV (145 aa)).

This sequence belongs to the PurH family.

The enzyme catalyses (6R)-10-formyltetrahydrofolate + 5-amino-1-(5-phospho-beta-D-ribosyl)imidazole-4-carboxamide = 5-formamido-1-(5-phospho-D-ribosyl)imidazole-4-carboxamide + (6S)-5,6,7,8-tetrahydrofolate. It carries out the reaction IMP + H2O = 5-formamido-1-(5-phospho-D-ribosyl)imidazole-4-carboxamide. It functions in the pathway purine metabolism; IMP biosynthesis via de novo pathway; 5-formamido-1-(5-phospho-D-ribosyl)imidazole-4-carboxamide from 5-amino-1-(5-phospho-D-ribosyl)imidazole-4-carboxamide (10-formyl THF route): step 1/1. Its pathway is purine metabolism; IMP biosynthesis via de novo pathway; IMP from 5-formamido-1-(5-phospho-D-ribosyl)imidazole-4-carboxamide: step 1/1. In Bacillus cereus (strain ATCC 10987 / NRS 248), this protein is Bifunctional purine biosynthesis protein PurH.